A 589-amino-acid chain; its full sequence is Phenylalanine--tRNA ligase beta subunit (589 aa).

Residues Leu302–Met379 enclose the B5 domain. Mg(2+)-binding residues include Asp357, Asp363, Glu366, and Asp367.

Belongs to the phenylalanyl-tRNA synthetase beta subunit family. Type 2 subfamily. Heterotetramer; dimer of two heterodimers formed by FARSA and FARSB. The cofactor is Mg(2+).

It localises to the cytoplasm. It carries out the reaction tRNA(Phe) + L-phenylalanine + ATP = L-phenylalanyl-tRNA(Phe) + AMP + diphosphate + H(+). This Mus musculus (Mouse) protein is Phenylalanine--tRNA ligase beta subunit (Farsb).